The chain runs to 577 residues: External alternative NAD(P)H-ubiquinone oxidoreductase B1, mitochondrial (577 aa).

The N-terminal 35 residues, 1 to 35, are a transit peptide targeting the mitochondrion; that stretch reads MRGFTYLSKVLHSHSSYSKLLVLCSVSTGGLLVYA. 57 to 87 provides a ligand contact to FAD; that stretch reads RVVVLGTGWGGTSFLKDVDISSYDVQVVSPR. 221 to 257 serves as a coordination point for NAD(+); it reads LHFVIVGGGPTGVEFAAELHDYVYEDLVKIYPSVKDF. The EF-hand domain maps to 378 to 413; it reads KVMEDISAIFKAADKDDSGTLSIEEFRDVLEDIIIR. Ca(2+)-binding residues include D391, D393, S395, T397, and E402. The Microbody targeting signal signature appears at 568–577; it reads YIFGRDSSRI.

It belongs to the NADH dehydrogenase family. Requires FAD as cofactor.

The protein resides in the mitochondrion inner membrane. Its subcellular location is the peroxisome. It carries out the reaction a quinone + NADH + H(+) = a quinol + NAD(+). It catalyses the reaction a ubiquinone + NADH + H(+) = a ubiquinol + NAD(+). With respect to regulation, activity is calcium-dependent with a more pronounced effect at higher pH. Its function is as follows. Alternative NADH-ubiquinone oxidoreductase which catalyzes the oxidation of mitochondrial NADH does not translocate protons across the inner mitochondrial membrane. Calcium-dependent NAD(P)H dehydrogenase. Binds calcium ions. This Solanum tuberosum (Potato) protein is External alternative NAD(P)H-ubiquinone oxidoreductase B1, mitochondrial (NDB1).